The primary structure comprises 573 residues: Lauric acid 10-hydroxylase (573 aa).

2 helical membrane-spanning segments follow: residues 3 to 23 (YVNI…LMSL) and 298 to 318 (LFPT…LLIF). Residue cysteine 516 coordinates heme.

Belongs to the cytochrome P450 family. The cofactor is heme. In terms of tissue distribution, mostly expressed in flowers and leaves and, at low levels, in roots and stems.

Its subcellular location is the endoplasmic reticulum membrane. The catalysed reaction is an omega-methyl-medium-chain fatty acid + reduced [NADPH--hemoprotein reductase] + O2 = an omega-hydroxy-medium-chain fatty acid + oxidized [NADPH--hemoprotein reductase] + H2O + H(+). The enzyme catalyses decanoate + reduced [NADPH--hemoprotein reductase] + O2 = 10-hydroxydecanoate + oxidized [NADPH--hemoprotein reductase] + H2O + H(+). It catalyses the reaction dodecanoate + reduced [NADPH--hemoprotein reductase] + O2 = 12-hydroxydodecanoate + oxidized [NADPH--hemoprotein reductase] + H2O + H(+). The protein operates within lipid metabolism; fatty acid metabolism. In terms of biological role, cytochrome P450 hydroxylase catalyzing the conversion of decanoate (capric acid) and dodecanoate (lauric acid) to their corresponding omega-hydroxy metabolites, 10-hydroxydecanoate and 12-hydroxydodecanoate, respectively; these hydroxylated components affect plant growth, including reducing root elongation. This is Lauric acid 10-hydroxylase from Petunia hybrida (Petunia).